An 87-amino-acid chain; its full sequence is Kappa 1a-bungarotoxin (87 aa).

A signal peptide spans 1-21 (MKTLLLTLVVVTIVCLDLGYT). Cystine bridges form between cysteine 24–cysteine 42, cysteine 35–cysteine 63, cysteine 48–cysteine 52, cysteine 67–cysteine 79, and cysteine 80–cysteine 85.

The protein belongs to the three-finger toxin family. Long-chain subfamily. Kappa-neurotoxin sub-subfamily. As to quaternary structure, homo- and heterodimer; non-covalently linked. As to expression, expressed by the venom gland.

It localises to the secreted. Functionally, postsynaptic neurotoxin that binds and inhibits neuronal nicotinic acetylcholine receptors (nAChR) with high affinity (IC(50)&lt;100 nM). Is a selective, and slowly reversible antagonist of alpha-3/CHRNA3-containing and some alpha-4/CHRNA4-containing AChRs. The chain is Kappa 1a-bungarotoxin from Bungarus candidus (Malayan krait).